The sequence spans 343 residues: Programmed cell death protein 2 (343 aa).

Positions 134, 137, 145, 148, 154, 158, 167, and 171 each coordinate Zn(2+). Residues 134-171 (CRVCGCLAPMTCSRCKQAHYCSKEHQTLDWRLGHKQAC) form an MYND-type; atypical zinc finger.

Ubiquitinated by PRKN, promoting proteasomal degradation.

The protein localises to the nucleus. Its function is as follows. May be a DNA-binding protein with a regulatory function. May play an important role in cell death and/or in regulation of cell proliferation. This is Programmed cell death protein 2 (Pdcd2) from Mus musculus (Mouse).